We begin with the raw amino-acid sequence, 231 residues long: Cytochrome b-c1 complex subunit Rieske, mitochondrial (231 aa).

The transit peptide at 1–24 directs the protein to the mitochondrion; it reads MAPVSIVSRAAMRAAAAPARAVRA. Residues 25–32 constitute a propeptide, removed in mature form; it reads LTTSTALQ. Residues 33–65 are Mitochondrial matrix-facing; that stretch reads GSSSSTFESPFKGESKAAKVPDFGKYMSKAPPS. Residues 66 to 95 traverse the membrane as a helical segment; it reads TNMLFSYFMVGTMGAITAAGAKSTIQEFLK. The Mitochondrial intermembrane portion of the chain corresponds to 96 to 231; the sequence is NMSASADVLA…FPEEGKLVIG (136 aa). The region spanning 134 to 229 is the Rieske domain; that stretch reads RHRTPAEIEE…YEFPEEGKLV (96 aa). The [2Fe-2S] cluster site is built by cysteine 174, histidine 176, cysteine 193, and histidine 196. A disulfide bond links cysteine 179 and cysteine 195.

The protein belongs to the Rieske iron-sulfur protein family. Component of the ubiquinol-cytochrome c oxidoreductase (cytochrome b-c1 complex, complex III, CIII), a multisubunit enzyme composed of 10 subunits. The complex is composed of 3 respiratory subunits cytochrome b (cob), cytochrome c1 (cyt-1) and Rieske protein (fes-1), 2 core protein subunits pep and ucr-1, and 5 low-molecular weight protein subunits qcr6, qcr7, qcr8, qcr9 and probably NCU16844/qcr10. The complex exists as an obligatory dimer and forms supercomplexes (SCs) in the inner mitochondrial membrane with NADH-ubiquinone oxidoreductase (complex I, CI) and cytochrome c oxidase (complex IV, CIV), resulting in different assemblies (supercomplexes SCI(1)III(2), SCIII(2)IV(1) and SCIII(2)IV(2) as well as higher order I(x)III(y)IV(z) megacomplexes). The cofactor is [2Fe-2S] cluster. Post-translationally, processed by both the mitochondrial processing peptidase (MPP) and the mitochondrial intermediate protease (MIP). Initially, MPP removes 25 amino acids from the newly imported precursor in the mitochondrial matrix. This proteolytic processing is then followed by a second proteolytic cleavage by MIP, which removes an octapeptide to generate mature-sized Rieske protein.

The protein localises to the mitochondrion inner membrane. It carries out the reaction a quinol + 2 Fe(III)-[cytochrome c](out) = a quinone + 2 Fe(II)-[cytochrome c](out) + 2 H(+)(out). Functionally, component of the ubiquinol-cytochrome c oxidoreductase, a multisubunit transmembrane complex that is part of the mitochondrial electron transport chain which drives oxidative phosphorylation. The respiratory chain contains 3 multisubunit complexes succinate dehydrogenase (complex II, CII), ubiquinol-cytochrome c oxidoreductase (cytochrome b-c1 complex, complex III, CIII) and cytochrome c oxidase (complex IV, CIV), that cooperate to transfer electrons derived from NADH and succinate to molecular oxygen, creating an electrochemical gradient over the inner membrane that drives transmembrane transport and the ATP synthase. The cytochrome b-c1 complex catalyzes electron transfer from ubiquinol to cytochrome c, linking this redox reaction to translocation of protons across the mitochondrial inner membrane, with protons being carried across the membrane as hydrogens on the quinol. In the process called Q cycle, 2 protons are consumed from the matrix, 4 protons are released into the intermembrane space and 2 electrons are passed to cytochrome c. The Rieske protein is a catalytic core subunit containing a [2Fe-2S] iron-sulfur cluster. It cycles between 2 conformational states during catalysis to transfer electrons from the quinol bound in the Q(0) site in cytochrome b to cytochrome c1. In Neurospora crassa (strain ATCC 24698 / 74-OR23-1A / CBS 708.71 / DSM 1257 / FGSC 987), this protein is Cytochrome b-c1 complex subunit Rieske, mitochondrial (fes-1).